A 249-amino-acid polypeptide reads, in one-letter code: DNA polymerase sliding clamp (249 aa).

This sequence belongs to the PCNA family. Homotrimer. The subunits circularize to form a toroid; DNA passes through its center. Replication factor C (RFC) is required to load the toroid on the DNA.

In terms of biological role, sliding clamp subunit that acts as a moving platform for DNA processing. Responsible for tethering the catalytic subunit of DNA polymerase and other proteins to DNA during high-speed replication. This chain is DNA polymerase sliding clamp, found in Thermococcus onnurineus (strain NA1).